The primary structure comprises 1139 residues: Hapless 2 (1139 aa).

The first 22 residues, 1–22, serve as a signal peptide directing secretion; that stretch reads MCRAIAVALIVYLAQHYILAHA. Over 23-630 the chain is Extracellular; it reads EVIASGRLEK…TKKCWSKFGR (608 aa). Cystine bridges form between cysteine 33-cysteine 44, cysteine 136-cysteine 164, cysteine 147-cysteine 210, cysteine 165-cysteine 383, cysteine 167-cysteine 190, cysteine 366-cysteine 390, and cysteine 475-cysteine 482. Residues 241-272 are compositionally biased toward low complexity; that stretch reads APSPTTATTSATPRTNNSSSANSTNSTNSPAP. The segment at 241–283 is disordered; sequence APSPTTATTSATPRTNNSSSANSTNSTNSPAPQFLSPPAPSTR. Asparagine 497 is a glycosylation site (N-linked (GlcNAc...) asparagine). Cysteine 515 and cysteine 556 are oxidised to a cystine. Threonine 577 carries an O-linked (GlcNAc...) threonine glycan. A helical transmembrane segment spans residues 631–651; that stretch reads LLGIIGGALVGLGLLAVALKF. Topologically, residues 652 to 1139 are cytoplasmic; that stretch reads GWLASLAASC…PVYDWQAPPK (488 aa). 2 disordered regions span residues 689–719 and 741–1139; these read GGGQ…AEVA and HGGG…APPK. Residues 753-767 show a composition bias toward basic and acidic residues; that stretch reads QHADTRHLQDRDSRA. Residues 770-789 show a composition bias toward low complexity; the sequence is GGASIGSSSAGGSSSLSSYS. The segment covering 829–851 has biased composition (basic and acidic residues); that stretch reads WDARGRSPRVADEHGSPRQRYDG. The span at 868–884 shows a compositional bias: gly residues; that stretch reads YDGGSGGGGGGGGGGYG. Pro residues predominate over residues 887-904; that stretch reads APPPQGPPPHPVGAPPPP. 2 stretches are compositionally biased toward gly residues: residues 919 to 943 and 955 to 965; these read PGGG…GVDQ and RGGGGPGGMRG. The segment covering 978–991 has biased composition (pro residues); that stretch reads GPHPHAPPPPPPPQ. Residues 1018–1029 are compositionally biased toward basic and acidic residues; that stretch reads GREEEAGGDRRG. Positions 1040–1049 are enriched in gly residues; the sequence is GGRGAGGGRG. Positions 1054–1067 are enriched in pro residues; sequence IGSPPPGPLQPPEY. Gly residues-rich tracts occupy residues 1078–1096 and 1106–1118; these read GAGG…GGVG and GGRG…GRGR.

This sequence belongs to the HAP2/GCS1 family. As to quaternary structure, monomer. Homotrimer. Membrane contact and insertion (via its extracellular domain) into a lipid membrane probably triggers trimerization. Post-translationally, the protein present at the cell membrane is rapidly degraded after fusion between male (minus) and female (plus) gametes, contrary to the protein present in intracellular pools. This may represent a mechanism to avoid fusion of several male gametes with a single female gamete. N-glycosylated.

The protein resides in the cell membrane. It localises to the cell projection. The protein localises to the cytoplasmic vesicle membrane. Functionally, during fertilization, required on male (minus) gametes for their fusion with female (plus) gametes. Required for membrane fusion, but not for the initial adhesion between gametes. Inserts (via its extracellular domain) into lipid membranes (in vitro). Probably initiates the fusion of gamete cell membranes by inserting its extracellular domain into the cell membrane of a female gamete. This chain is Hapless 2, found in Chlamydomonas reinhardtii (Chlamydomonas smithii).